A 402-amino-acid polypeptide reads, in one-letter code: Multidrug resistance protein MdtH (402 aa).

Over 1–12 (MSRVSQARNLGK) the chain is Cytoplasmic. The helical transmembrane segment at 13–33 (YFLLIDNMLVVLVFFVVFPLI) threads the bilayer. The Periplasmic portion of the chain corresponds to 34-98 (SIRFVDQMGW…GFATMGIAHE (65 aa)). A helical membrane pass occupies residues 99–116 (PWLLWFSCFLSGLGGTLF). The Cytoplasmic segment spans residues 117 to 138 (DPPRSALVVKLIRPEQRGRFFS). The chain crosses the membrane as a helical span at residues 139–159 (LLMMQDSAGAVIGALLGSWLL). Residues 160-164 (QYDFR) lie on the Periplasmic side of the membrane. Residues 165 to 185 (LVCATGAILFILCALFNAWLL) form a helical membrane-spanning segment. At 186–213 (PAWKLSTVRTPVREGMRRVMSDKRFVTY) the chain is on the cytoplasmic side. Residues 214-234 (VLTLAGYYMLAVQVMLMLPIM) form a helical membrane-spanning segment. Topologically, residues 235–243 (VNDIAGSPA) are periplasmic. A helical transmembrane segment spans residues 244-264 (AVKWMYAIEACLSLTLLYPIA). The Cytoplasmic segment spans residues 265 to 276 (RWSEKRFRLEHR). The helical transmembrane segment at 277–297 (LMAGLLVMSLSMIPIGMVGNL) threads the bilayer. The Periplasmic portion of the chain corresponds to 298-299 (QQ). Residues 300-320 (LFTLICAFYIGSVIAEPARET) form a helical membrane-spanning segment. The Cytoplasmic segment spans residues 321-339 (LSASLADARARGSYMGFSR). Residues 340–360 (LGLAIGGAIGYIGGGWLFDMG) form a helical membrane-spanning segment. At 361-367 (KALTQPE) the chain is on the periplasmic side. Residues 368–388 (LPWMMLGIIGFITFLALGWQF) traverse the membrane as a helical segment. Residues 389 to 402 (SHKRTPRRMLEPGA) are Cytoplasmic-facing.

Belongs to the major facilitator superfamily. DHA1 family. MdtH (TC 2.A.1.2.21) subfamily.

It is found in the cell inner membrane. This is Multidrug resistance protein MdtH from Salmonella choleraesuis (strain SC-B67).